A 300-amino-acid chain; its full sequence is uncharacterized protein (300 aa).

3 Solcar repeats span residues 10–101 (ESQT…VKDF), 119–199 (GKAI…AKEY), and 212–294 (FQNF…LIPF). The next 6 helical transmembrane spans lie at 16–36 (IVGS…VDTI), 70–86 (ATSL…YKIV), 121–141 (AIMH…LLPL), 178–198 (TAAR…FAKE), 215–235 (FFTS…LDVI), and 275–295 (LTTG…IPFF).

Belongs to the mitochondrial carrier (TC 2.A.29) family.

The protein resides in the mitochondrion inner membrane. This is an uncharacterized protein from Schizosaccharomyces pombe (strain 972 / ATCC 24843) (Fission yeast).